A 337-amino-acid chain; its full sequence is uncharacterized protein (337 aa).

Low complexity predominate over residues 42–66 (SHSVSPSPSPSDFSSSSSSSSSSPS). Residues 42 to 68 (SHSVSPSPSPSDFSSSSSSSSSSPSTF) are disordered. One can recognise an Exonuclease domain in the interval 129 to 304 (FLVIDLEGKV…DDTKNITRVV (176 aa)). Mg(2+)-binding residues include aspartate 133, glutamate 135, and aspartate 234. The Proton acceptor role is filled by glutamate 135. Glutamate 135 is an AMP binding site. Histidine 291 acts as the Proton acceptor in catalysis. Histidine 291 is a binding site for AMP. Mg(2+) is bound at residue aspartate 296.

This is an uncharacterized protein from Arabidopsis thaliana (Mouse-ear cress).